Reading from the N-terminus, the 150-residue chain is Urease accessory protein UreE (150 aa).

It belongs to the UreE family.

Its subcellular location is the cytoplasm. Functionally, involved in urease metallocenter assembly. Binds nickel. Probably functions as a nickel donor during metallocenter assembly. The protein is Urease accessory protein UreE of Staphylococcus saprophyticus subsp. saprophyticus (strain ATCC 15305 / DSM 20229 / NCIMB 8711 / NCTC 7292 / S-41).